A 259-amino-acid chain; its full sequence is 7alpha-hydroxysteroid dehydrogenase (259 aa).

NAD(+)-binding positions include Ile-18, 37 to 38 (DY), and Asn-90. 2 residues coordinate glycochenodeoxycholate: Ser-145 and Tyr-158. Residues Tyr-158, Lys-162, and 191–193 (ILT) each bind NAD(+). Tyr-158 acts as the Proton acceptor in catalysis.

This sequence belongs to the short-chain dehydrogenases/reductases (SDR) family. As to quaternary structure, homotetramer.

It catalyses the reaction cholate + NAD(+) = 3alpha,12alpha-dihydroxy-7-oxo-5beta-cholanate + NADH + H(+). The catalysed reaction is chenodeoxycholate + NAD(+) = 7-oxolithocholate + NADH + H(+). The enzyme catalyses taurochenodeoxycholate + NAD(+) = 7-oxotaurolithocholate + NADH + H(+). It carries out the reaction glycochenodeoxycholate + NAD(+) = 7-oxoglycolithocholate + NADH + H(+). It catalyses the reaction taurocholate + NAD(+) = 7-oxo-taurodeoxycholate + NADH + H(+). The catalysed reaction is glycocholate + NAD(+) = 7-oxo-glycodeoxycholate + NADH + H(+). The enzyme catalyses an aromatic primary alcohol + NAD(+) = an aromatic aldehyde + NADH + H(+). It carries out the reaction benzyl alcohol + NAD(+) = benzaldehyde + NADH + H(+). It catalyses the reaction 4-cyanobenzyl alcohol + NAD(+) = 4-cyanobenzaldehyde + NADH + H(+). The catalysed reaction is 4-acetoxybenzyl alcohol + NAD(+) = 4-acetoxybenzaldehyde + NADH + H(+). The enzyme catalyses 4-(trifluoromethyl)benzyl alcohol + NAD(+) = 4-(trifluoromethyl)benzaldehyde + NADH + H(+). In terms of biological role, 7alpha-hydroxysteroid dehydrogenase involved in the metabolism of bile acids in the gut. Catalyzes the NAD(+)-dependent oxidation of the 7alpha-hydroxy group of 7alpha-hydroxysteroids, such as cholate, chenodeoxycholate, taurochenodeoxycholate, glycochenodeoxycholate, taurocholate and glycocholate, to the corresponding 7-oxosteroids. Since it is also able to catalyze the reduction of nonsteroidal carbonyl compounds such as various benzaldehyde analogs to their corresponding benzyl alcohols, this enzyme may also function in the detoxification of xenobiotics containing carbonyl groups in the large intestine. The sequence is that of 7alpha-hydroxysteroid dehydrogenase from Bacteroides fragilis (strain ATCC 25285 / DSM 2151 / CCUG 4856 / JCM 11019 / LMG 10263 / NCTC 9343 / Onslow / VPI 2553 / EN-2).